Here is a 459-residue protein sequence, read N- to C-terminus: cAMP-dependent protein kinase regulatory subunit (459 aa).

A dimerization and phosphorylation region spans residues 30–219 (QFCANYFNTK…TLANNLKNNF (190 aa)). 2 disordered regions span residues 78 to 109 (VNDRQPSFKSPFGVNDPHSNHDEDPHAKDTKT) and 125 to 168 (FDVK…PSSK). Residues 95-109 (HSNHDEDPHAKDTKT) show a composition bias toward basic and acidic residues. Positions 146 to 168 (KPSSSSQPNQQSASASSKTPSSK) are enriched in low complexity. At Ser-180 the chain carries Phosphoserine. Residues 220–335 (LFKQ…FLKD), Glu-285, Arg-294, 338–454 (VLKS…KSQD), Glu-404, and Arg-413 each bind 3',5'-cyclic AMP.

The protein belongs to the cAMP-dependent kinase regulatory chain family. Tetramer, composed of 2 regulatory (R) and 2 catalytic (C) subunits. In the presence of cAMP it dissociates into 2 active monomeric C subunits and an R dimer.

The chain is cAMP-dependent protein kinase regulatory subunit (BCY1) from Candida albicans (strain SC5314 / ATCC MYA-2876) (Yeast).